Here is a 434-residue protein sequence, read N- to C-terminus: MRVLVLGSGVIGTTSAWYLRQAGFEVTVIDRQPGPALETSFANAGQLSFGYTSPWAAPGVPKKAIGWLFEKHAPLAIKPGMDLAQYRWLWQMLRNCTHERYAINKARMVRMSEYSRDCLNELRAQIGIEFEGRDLGTTQLFRTQQQLDASAQDIEILAQYGVPYEVLDRAGIIQAEPALAHVDGLVGALRLPRDQTGDCQLFTRRLAQMCVDAGVEFRFDQDITGLVSDGERITGVHVNGTLETADRFVVALGSYSPALVAPLGMRLPVYPLKGYSLTLPITDPAMAPTSTILDESYKVAVTRFDDRIRVGGMAEVAGFDLSLSQRRRETLELVVSDLYPKGGDLSRAQFWTGLRPATPDGTPVIGATPFRNLYLNTGHGTLGWTMACGSGRYLADLMSARQPQISTEGLDVFRYGQYGHAPQHENRTCVLPAR.

3-17 (VLVLGSGVIGTTSAW) is an FAD binding site.

This sequence belongs to the DadA oxidoreductase family. FAD is required as a cofactor.

The enzyme catalyses a D-alpha-amino acid + A + H2O = a 2-oxocarboxylate + AH2 + NH4(+). The protein operates within amino-acid degradation; D-alanine degradation; NH(3) and pyruvate from D-alanine: step 1/1. Oxidative deamination of D-amino acids. The polypeptide is D-amino acid dehydrogenase (Stenotrophomonas maltophilia (strain R551-3)).